We begin with the raw amino-acid sequence, 536 residues long: Heparanase-like protein 3 (536 aa).

Positions 1–24 (MAYRQILAIVLFLCVFQFLDCTVS) are cleaved as a signal peptide. 4 N-linked (GlcNAc...) asparagine glycosylation sites follow: N30, N122, N176, and N191. E202 serves as the catalytic Proton donor. N265 and N308 each carry an N-linked (GlcNAc...) asparagine glycan. E319 serves as the catalytic Nucleophile. 4 N-linked (GlcNAc...) asparagine glycosylation sites follow: N370, N427, N438, and N510.

Belongs to the glycosyl hydrolase 79 family.

The protein localises to the lysosome membrane. The protein resides in the secreted. In terms of biological role, endoglycosidase which is a cell surface and extracellular matrix-degrading enzyme. Cleaves heparan sulfate proteoglycans (HSPGs) into heparan sulfate side chains and core proteoglycans. In Arabidopsis thaliana (Mouse-ear cress), this protein is Heparanase-like protein 3.